The primary structure comprises 330 residues: Neurogenic differentiation factor 4 (330 aa).

Residues 1–79 (MTKTYTKAKE…RGPKKKKMTK (79 aa)) are disordered. Residues 25-35 (LSSKDELKAEN) show a composition bias toward basic and acidic residues. Acidic residues predominate over residues 52 to 64 (DSIEEEEEEEDDG). Positions 67-79 (PKRRGPKKKKMTK) are enriched in basic residues. Residues 73-79 (KKKKMTK) carry the Nuclear localization signal motif. The bHLH domain maps to 87–139 (ARRVKANARERTRMHGLNDALDNLRRVMPCYSKTQKLSKIETLRLARNYIWAL). Residues 162 to 183 (LSQPTSNLVAGCLQLGPQTLFL) are leucine-zipper.

Efficient DNA binding requires dimerization with another bHLH protein. In terms of processing, serine or threonine phosphorylation within the basic region may regulate neurogenic activity. Expressed in both the developing central nervous system and peripheral nervous system.

Its subcellular location is the nucleus. Probably acts as a transcriptional activator. Mediates neuronal differentiation. Required for the regulation of amacrine cell fate specification in the retina. This Gallus gallus (Chicken) protein is Neurogenic differentiation factor 4 (NEUROD4).